A 1296-amino-acid polypeptide reads, in one-letter code: DNA-directed RNA polymerase subunit beta' (1296 aa).

Zn(2+)-binding residues include C60, C62, C75, and C78. Residues 188–209 (GAKGDARRKVRESAEREMRQIR) are disordered. The Mg(2+) site is built by D535, D537, and D539. The Zn(2+) site is built by C877, C954, C961, and C964.

The protein belongs to the RNA polymerase beta' chain family. In terms of assembly, the RNAP catalytic core consists of 2 alpha, 1 beta, 1 beta' and 1 omega subunit. When a sigma factor is associated with the core the holoenzyme is formed, which can initiate transcription. Requires Mg(2+) as cofactor. It depends on Zn(2+) as a cofactor.

It carries out the reaction RNA(n) + a ribonucleoside 5'-triphosphate = RNA(n+1) + diphosphate. Its function is as follows. DNA-dependent RNA polymerase catalyzes the transcription of DNA into RNA using the four ribonucleoside triphosphates as substrates. The protein is DNA-directed RNA polymerase subunit beta' of Parafrankia sp. (strain EAN1pec).